A 408-amino-acid chain; its full sequence is Bone morphogenetic protein 4 (408 aa).

A signal peptide spans 1-19; that stretch reads MIPGNRMLMVVLLCQVLLG. Residues 20–292 constitute a propeptide that is removed on maturation; the sequence is GASHASLIPE…HTLTRRRAKR (273 aa). Residue Ser-91 is modified to Phosphoserine. The interval 91–111 is disordered; the sequence is SGEEEEEEQSQGTGLEYPERP. Asn-144 and Asn-209 each carry an N-linked (GlcNAc...) asparagine glycan. Residues 281–307 are disordered; it reads RGHTLTRRRAKRSPKHHPQRSRKKNKN. The span at 284–307 shows a compositional bias: basic residues; it reads TLTRRRAKRSPKHHPQRSRKKNKN. Cystine bridges form between Cys-308–Cys-373, Cys-337–Cys-405, and Cys-341–Cys-407. Asn-350 and Asn-365 each carry an N-linked (GlcNAc...) asparagine glycan.

This sequence belongs to the TGF-beta family. In terms of assembly, homodimer; disulfide-linked. Interacts with SOSTDC1, GREM2, RGMA, RGMB and RGMC. Part of a complex consisting of TWSG1 and CHRD. Interacts with the serine proteases, HTRA1 and HTRA3; the interaction with either inhibits BMP4-mediated signaling. The HTRA protease activity is required for this inhibition. Interacts with FBN1 (via N-terminal domain) and FBN2. Interacts with type I receptor BMPR1A. Interacts with type II receptor BMPR2. Interacts with FSTL1; this interaction inhibits the activation of the BMP4/Smad1/5/8 signaling pathway. Interacts with SCUBE3. Interacts with TGFBR3. In the cochlea, detected in nonprosensory regions and outer sulcus (at protein level). Prior to gastrulation, expressed in the extraembryonic ectoderm. Later, expressed in the extraembryonic mesoderm.

The protein resides in the secreted. It localises to the extracellular space. Its subcellular location is the extracellular matrix. In terms of biological role, growth factor of the TGF-beta superfamily that plays essential roles in many developmental processes, including neurogenesis, vascular development, angiogenesis and osteogenesis. Acts in concert with PTHLH/PTHRP to stimulate ductal outgrowth during embryonic mammary development and to inhibit hair follicle induction. Initiates the canonical BMP signaling cascade by associating with type I receptor BMPR1A and type II receptor BMPR2. Once all three components are bound together in a complex at the cell surface, BMPR2 phosphorylates and activates BMPR1A. In turn, BMPR1A propagates signal by phosphorylating SMAD1/5/8 that travel to the nucleus and act as activators and repressors of transcription of target genes. Positively regulates the expression of odontogenic development regulator MSX1 via inducing the IPO7-mediated import of SMAD1 to the nucleus. Required for MSX1-mediated mesenchymal molar tooth bud development beyond the bud stage, via promoting Wnt signaling. Acts as a positive regulator of odontoblast differentiation during mesenchymal tooth germ formation, expression is repressed during the bell stage by MSX1-mediated inhibition of CTNNB1 signaling. Able to induce its own expression in dental mesenchymal cells and also in the neighboring dental epithelial cells via an MSX1-mediated pathway. Can also signal through non-canonical BMP pathways such as ERK/MAP kinase, PI3K/Akt or SRC cascades. For example, induces SRC phosphorylation which, in turn, activates VEGFR2, leading to an angiogenic response. In Mus musculus (Mouse), this protein is Bone morphogenetic protein 4.